The sequence spans 612 residues: Bifunctional 6(G)-fructosyltransferase/2,1-fructan:2,1-fructan 1-fructosyltransferase (612 aa).

Residues 1 to 24 (MDAQDIESRHPLIGARPRRRALRS) are Cytoplasmic-facing. A helical; Signal-anchor for type II membrane protein transmembrane segment spans residues 25 to 45 (LSILLAAALLLGLVLFYANGT). Residues 46–612 (GSGTAVDPVR…NSTYNDFYHF (567 aa)) are Vacuolar-facing. Residues 82–85 (YMND), Gln-101, and Trp-109 each bind substrate. Asp-85 is an active-site residue. Residue Asn-111 is glycosylated (N-linked (GlcNAc...) asparagine). Substrate-binding positions include 144–145 (WT) and 208–209 (RD). N-linked (GlcNAc...) asparagine glycosylation is found at Asn-216 and Asn-230. Glu-267 is a binding site for substrate. N-linked (GlcNAc...) asparagine glycosylation is present at Asn-465. A disulfide bond links Cys-466 and Cys-514. N-linked (GlcNAc...) asparagine glycosylation is found at Asn-586 and Asn-603.

The protein belongs to the glycosyl hydrolase 32 family. Post-translationally, might be processed in two N-terminal and C-terminal proteolytic fragments.

It localises to the vacuole membrane. It carries out the reaction [1-beta-D-fructofuranosyl-(2-&gt;1)-]m+1 alpha-D-glucopyranoside + [1-beta-D-fructofuranosyl-(2-&gt;1)-]n+1 alpha-D-glucopyranoside = [1-beta-D-fructofuranosyl-(2-&gt;1)-]m alpha-D-glucopyranoside + [1-beta-D-fructofuranosyl-(2-&gt;1)-]n+1 beta-D-fructofuranosyl-(2-&gt;6)-alpha-D-glucopyranoside (m &gt; 0, n &gt;= 0).. The catalysed reaction is [beta-D-fructosyl-(2-&gt;1)-]m + [beta-D-fructosyl-(2-&gt;1)-]n = [beta-D-fructosyl-(2-&gt;1)-]m-1 + [beta-D-fructosyl-(2-&gt;1)-]n+1.. Involved in the synthesis of fructan of the inulin neoseries. Catalyzes a self-transfer between identical oligosaccharides of the 1-kestose series. This Allium cepa (Onion) protein is Bifunctional 6(G)-fructosyltransferase/2,1-fructan:2,1-fructan 1-fructosyltransferase.